A 177-amino-acid polypeptide reads, in one-letter code: Phycoerythrin beta subunit (177 aa).

Residues Y18, K28, N35, and D39 each coordinate (2R,3E)-phycoerythrobilin. 15,16-dihydrobiliverdin contacts are provided by C50, D54, and C61. (2R,3E)-phycoerythrobilin-binding residues include C82, R84, and D85. R129 contributes to the 15,16-dihydrobiliverdin binding site. Residue N144 coordinates (2R,3E)-phycoerythrobilin. 15,16-dihydrobiliverdin contacts are provided by Q148 and K149. (2R,3E)-phycoerythrobilin contacts are provided by P154, G156, and C158.

This sequence belongs to the phycobiliprotein family. Heterotetramer of 2 different alpha chains and 2 identical beta chains which form 2 alpha-beta heterodimers within the heterotetramer. The two alpha-beta heterodimers are rotated to an open configuration in contrast to the closed configuration found in other cryptophyte species due to the insertion of a single amino acid, 'Asp-65', in a conserved region of the alpha chain. In the open form, the central chromophores are not in physical contact but are separated by a water-filled channel. Contains three phycoerythrobilin chromophores and one 15,16-dihydrobiliverdin chromophore with binding of the phycoerythrobilin chromophores mediated by both the alpha and beta subunits.

It localises to the plastid. Its subcellular location is the chloroplast thylakoid membrane. Its function is as follows. Light-harvesting photosynthetic bile pigment-protein from the phycobiliprotein complex. In Hemiselmis andersenii (Cryptophyte alga), this protein is Phycoerythrin beta subunit.